A 590-amino-acid chain; its full sequence is Phosphatidylserine decarboxylase proenzyme 1, mitochondrial (590 aa).

A mitochondrion-targeting transit peptide spans 1–59; sequence MPLKPISFRWSKTSVRSVPNPFMYGPDNLNKPLSRASQMAERVHQQTPSSTNYQQRRYF. Residues 60–140 are Mitochondrial matrix-facing; sequence SYYYYQFPKI…GKERRRFIRW (81 aa). A helical transmembrane segment spans residues 141–159; it reads WTVTSLTIVLGGVYAKIKY. At 160-590 the chain is on the mitochondrial intermembrane side; it reads ERGDHEENPY…KVGQSLGGFV (431 aa). Active-site charge relay system; for autoendoproteolytic cleavage activity residues include Asp260, His403, and Ser558. Ser558 functions as the Schiff-base intermediate with substrate; via pyruvic acid; for decarboxylase activity in the catalytic mechanism. The residue at position 558 (Ser558) is a Pyruvic acid (Ser); by autocatalysis.

The protein belongs to the phosphatidylserine decarboxylase family. PSD-B subfamily. Eukaryotic type I sub-subfamily. As to quaternary structure, heterodimer of a large membrane-associated beta subunit and a small pyruvoyl-containing alpha subunit. The cofactor is pyruvate. Post-translationally, is synthesized initially as an inactive proenzyme. Formation of the active enzyme involves a self-maturation process in which the active site pyruvoyl group is generated from an internal serine residue via an autocatalytic post-translational modification. Two non-identical subunits are generated from the proenzyme in this reaction, and the pyruvate is formed at the N-terminus of the alpha chain, which is derived from the carboxyl end of the proenzyme. The autoendoproteolytic cleavage occurs by a canonical serine protease mechanism, in which the side chain hydroxyl group of the serine supplies its oxygen atom to form the C-terminus of the beta chain, while the remainder of the serine residue undergoes an oxidative deamination to produce ammonia and the pyruvoyl prosthetic group on the alpha chain. During this reaction, the Ser that is part of the protease active site of the proenzyme becomes the pyruvoyl prosthetic group, which constitutes an essential element of the active site of the mature decarboxylase.

The protein resides in the mitochondrion inner membrane. The enzyme catalyses a 1,2-diacyl-sn-glycero-3-phospho-L-serine + H(+) = a 1,2-diacyl-sn-glycero-3-phosphoethanolamine + CO2. It participates in phospholipid metabolism; phosphatidylethanolamine biosynthesis; phosphatidylethanolamine from CDP-diacylglycerol: step 2/2. Functionally, catalyzes the formation of phosphatidylethanolamine (PtdEtn) from phosphatidylserine (PtdSer). Plays a central role in phospholipid metabolism and in the interorganelle trafficking of phosphatidylserine. Important for virulence. This is Phosphatidylserine decarboxylase proenzyme 1, mitochondrial from Candida albicans (strain SC5314 / ATCC MYA-2876) (Yeast).